We begin with the raw amino-acid sequence, 359 residues long: Phospho-N-acetylmuramoyl-pentapeptide-transferase (359 aa).

Helical transmembrane passes span 3-23 (QILI…PVLI), 55-75 (VAIL…GLAL), 84-104 (GLLV…DDLI), 120-140 (TVGI…FGNA), 156-176 (IATV…LVSA), 187-207 (LDGL…LITF), 231-251 (LALV…WNAA), 255-275 (IFMG…LSVT), 280-300 (ILAV…VVQI), and 334-354 (FWLL…GEWL).

It belongs to the glycosyltransferase 4 family. MraY subfamily. Mg(2+) is required as a cofactor.

The protein resides in the cell membrane. It catalyses the reaction UDP-N-acetyl-alpha-D-muramoyl-L-alanyl-gamma-D-glutamyl-meso-2,6-diaminopimeloyl-D-alanyl-D-alanine + di-trans,octa-cis-undecaprenyl phosphate = di-trans,octa-cis-undecaprenyl diphospho-N-acetyl-alpha-D-muramoyl-L-alanyl-D-glutamyl-meso-2,6-diaminopimeloyl-D-alanyl-D-alanine + UMP. Its pathway is cell wall biogenesis; peptidoglycan biosynthesis. Its function is as follows. Catalyzes the initial step of the lipid cycle reactions in the biosynthesis of the cell wall peptidoglycan: transfers peptidoglycan precursor phospho-MurNAc-pentapeptide from UDP-MurNAc-pentapeptide onto the lipid carrier undecaprenyl phosphate, yielding undecaprenyl-pyrophosphoryl-MurNAc-pentapeptide, known as lipid I. The protein is Phospho-N-acetylmuramoyl-pentapeptide-transferase of Mycobacterium sp. (strain JLS).